The chain runs to 660 residues: ATP-dependent zinc metalloprotease FtsH (660 aa).

The interval 1–20 (MMPSSQRPSPRGSRQSPSPD) is disordered. Over 1 to 24 (MMPSSQRPSPRGSRQSPSPDQRGR) the chain is Cytoplasmic. A helical transmembrane segment spans residues 25-45 (IAFAILATLVVAVLLLTLFSH). Residues 46-118 (APSGQPLGYS…VQVSYITPGP (73 aa)) are Extracellular-facing. Residues 119-139 (GIASTIIEYVIFFGIFIGIWV) traverse the membrane as a helical segment. The Cytoplasmic segment spans residues 140–660 (YLTRRTQGSV…ASHDDTDPVS (521 aa)). 213 to 220 (GPPGTGKT) contributes to the ATP binding site. His435 lines the Zn(2+) pocket. The active site involves Glu436. Positions 439 and 511 each coordinate Zn(2+).

The protein in the central section; belongs to the AAA ATPase family. This sequence in the C-terminal section; belongs to the peptidase M41 family. Homohexamer. Zn(2+) serves as cofactor.

Its subcellular location is the cell membrane. In terms of biological role, acts as a processive, ATP-dependent zinc metallopeptidase for both cytoplasmic and membrane proteins. Plays a role in the quality control of integral membrane proteins. This Acidimicrobium ferrooxidans (strain DSM 10331 / JCM 15462 / NBRC 103882 / ICP) protein is ATP-dependent zinc metalloprotease FtsH.